A 363-amino-acid chain; its full sequence is Fructose-bisphosphate aldolase C-B (363 aa).

Residues arginine 56 and lysine 147 each coordinate substrate. Glutamate 188 serves as the catalytic Proton acceptor. Catalysis depends on lysine 230, which acts as the Schiff-base intermediate with dihydroxyacetone-P.

The protein belongs to the class I fructose-bisphosphate aldolase family. As to quaternary structure, homotetramer.

The enzyme catalyses beta-D-fructose 1,6-bisphosphate = D-glyceraldehyde 3-phosphate + dihydroxyacetone phosphate. It participates in carbohydrate degradation; glycolysis; D-glyceraldehyde 3-phosphate and glycerone phosphate from D-glucose: step 4/4. The polypeptide is Fructose-bisphosphate aldolase C-B (aldocb) (Danio rerio (Zebrafish)).